Consider the following 278-residue polypeptide: Bifunctional protein FolD (278 aa).

Residues 162 to 164 (GAG) and Ile228 contribute to the NADP(+) site.

The protein belongs to the tetrahydrofolate dehydrogenase/cyclohydrolase family. Homodimer.

The catalysed reaction is (6R)-5,10-methylene-5,6,7,8-tetrahydrofolate + NADP(+) = (6R)-5,10-methenyltetrahydrofolate + NADPH. The enzyme catalyses (6R)-5,10-methenyltetrahydrofolate + H2O = (6R)-10-formyltetrahydrofolate + H(+). It functions in the pathway one-carbon metabolism; tetrahydrofolate interconversion. Catalyzes the oxidation of 5,10-methylenetetrahydrofolate to 5,10-methenyltetrahydrofolate and then the hydrolysis of 5,10-methenyltetrahydrofolate to 10-formyltetrahydrofolate. This is Bifunctional protein FolD from Hydrogenobaculum sp. (strain Y04AAS1).